The following is a 206-amino-acid chain: Large ribosomal subunit protein uL4 (206 aa).

The interval 48 to 97 (THAVKNRSLVSGGGKKPWKQKHTGRARQGSTRASQWVGGGKAMGPKPRDY) is disordered. The span at 63–72 (KPWKQKHTGR) shows a compositional bias: basic residues.

This sequence belongs to the universal ribosomal protein uL4 family. In terms of assembly, part of the 50S ribosomal subunit.

Its function is as follows. One of the primary rRNA binding proteins, this protein initially binds near the 5'-end of the 23S rRNA. It is important during the early stages of 50S assembly. It makes multiple contacts with different domains of the 23S rRNA in the assembled 50S subunit and ribosome. Functionally, forms part of the polypeptide exit tunnel. The chain is Large ribosomal subunit protein uL4 from Anaeromyxobacter dehalogenans (strain 2CP-C).